Reading from the N-terminus, the 249-residue chain is Triosephosphate isomerase (249 aa).

Positions 12 and 14 each coordinate substrate. Lys14 bears the N6-acetyllysine mark. A 3'-nitrotyrosine modification is found at Tyr68. A Phosphoserine modification is found at Ser80. His96 (electrophile) is an active-site residue. Ser106 carries the post-translational modification Phosphoserine. A Glycyl lysine isopeptide (Lys-Gly) (interchain with G-Cter in SUMO1) cross-link involves residue Lys142. Lys149 bears the N6-succinyllysine mark. N6-acetyllysine; alternate is present on Lys156. Lys156 is subject to N6-succinyllysine; alternate. Phosphoserine is present on Ser159. Catalysis depends on Glu166, which acts as the Proton acceptor. Thr173 bears the Phosphothreonine mark. The residue at position 194 (Lys194) is an N6-acetyllysine; alternate. An N6-succinyllysine; alternate modification is found at Lys194. Lys194 carries the N6-methyllysine; alternate modification. Ser198 carries the phosphoserine modification. Tyr209 is modified (3'-nitrotyrosine). Ser212 carries the post-translational modification Phosphoserine. Thr214 is modified (phosphothreonine). The residue at position 223 (Ser223) is a Phosphoserine. An N6-acetyllysine modification is found at Lys238.

The protein belongs to the triosephosphate isomerase family. As to quaternary structure, homodimer.

It is found in the cytoplasm. The enzyme catalyses dihydroxyacetone phosphate = methylglyoxal + phosphate. It catalyses the reaction D-glyceraldehyde 3-phosphate = dihydroxyacetone phosphate. It functions in the pathway carbohydrate degradation; glycolysis; D-glyceraldehyde 3-phosphate from glycerone phosphate: step 1/1. The protein operates within carbohydrate biosynthesis; gluconeogenesis. In terms of biological role, triosephosphate isomerase is an extremely efficient metabolic enzyme that catalyzes the interconversion between dihydroxyacetone phosphate (DHAP) and D-glyceraldehyde-3-phosphate (G3P) in glycolysis and gluconeogenesis. Its function is as follows. It is also responsible for the non-negligible production of methylglyoxal a reactive cytotoxic side-product that modifies and can alter proteins, DNA and lipids. The protein is Triosephosphate isomerase (TPI1) of Gorilla gorilla gorilla (Western lowland gorilla).